The following is a 258-amino-acid chain: Cell division protein ZapD (258 aa).

The protein belongs to the ZapD family. Interacts with FtsZ.

It is found in the cytoplasm. Cell division factor that enhances FtsZ-ring assembly. Directly interacts with FtsZ and promotes bundling of FtsZ protofilaments, with a reduction in FtsZ GTPase activity. This is Cell division protein ZapD from Coxiella burnetii (strain RSA 331 / Henzerling II).